The primary structure comprises 171 residues: MAEKRNIFLVGPMGAGKSTIGRHLAQMLHLEFHDSDQEIESRTGADIAWVFDVEGEEGFRIRETQVVADLTEKQGIVLATGGGSIQSKEIRNNLSARGIVVYLETTIDKQVARTQRDKRRPLLQVDDPREVLESLAEVRNPLYEEIADVIVKTDEQSAKVVANQIIEQLGF.

ATP is bound at residue G14–T19. Residue S18 coordinates Mg(2+). Substrate-binding residues include D36, R60, and G82. ATP is bound at residue R120. R139 contributes to the substrate binding site. Q156 lines the ATP pocket.

Belongs to the shikimate kinase family. As to quaternary structure, monomer. Mg(2+) serves as cofactor.

It is found in the cytoplasm. It catalyses the reaction shikimate + ATP = 3-phosphoshikimate + ADP + H(+). The protein operates within metabolic intermediate biosynthesis; chorismate biosynthesis; chorismate from D-erythrose 4-phosphate and phosphoenolpyruvate: step 5/7. Its function is as follows. Catalyzes the specific phosphorylation of the 3-hydroxyl group of shikimic acid using ATP as a cosubstrate. This is Shikimate kinase from Shewanella pealeana (strain ATCC 700345 / ANG-SQ1).